Consider the following 142-residue polypeptide: Large ribosomal subunit protein uL22c (142 aa).

Belongs to the universal ribosomal protein uL22 family. Part of the 50S ribosomal subunit.

It is found in the plastid. It localises to the chloroplast. Functionally, this protein binds specifically to 23S rRNA. Its function is as follows. The globular domain of the protein is located near the polypeptide exit tunnel on the outside of the subunit, while an extended beta-hairpin is found that lines the wall of the exit tunnel in the center of the 70S ribosome. The sequence is that of Large ribosomal subunit protein uL22c (rpl22) from Pinus thunbergii (Japanese black pine).